A 76-amino-acid polypeptide reads, in one-letter code: uncharacterized protein (76 aa).

This is an uncharacterized protein from Bacillus subtilis (strain 168).